Consider the following 317-residue polypeptide: Ribosomal RNA small subunit methyltransferase H (317 aa).

Residues Gly-30–His-32, Asp-50, Tyr-78, Asp-95, and Gln-102 each bind S-adenosyl-L-methionine.

It belongs to the methyltransferase superfamily. RsmH family.

It is found in the cytoplasm. It carries out the reaction cytidine(1402) in 16S rRNA + S-adenosyl-L-methionine = N(4)-methylcytidine(1402) in 16S rRNA + S-adenosyl-L-homocysteine + H(+). Specifically methylates the N4 position of cytidine in position 1402 (C1402) of 16S rRNA. This is Ribosomal RNA small subunit methyltransferase H from Nitrosomonas eutropha (strain DSM 101675 / C91 / Nm57).